A 914-amino-acid polypeptide reads, in one-letter code: Polyribonucleotide nucleotidyltransferase (914 aa).

Residues 407-427 (YMHNYEMPPYSTGETGRVGSP) are disordered. Residues Asp-521 and Asp-527 each contribute to the Mg(2+) site. The KH domain maps to 587–646 (PRIITTSVPVEKIGEVIGPKGKMINQIQEDTGAEIAIEDDGTVFISSEGGEAAKKAKSII). Residues 658 to 730 (GETYNGKVVK…DRGKISLAIP (73 aa)) enclose the S1 motif domain. Residues 727 to 914 (LAIPGFEDQE…VRRDFDPFED (188 aa)) are disordered. 3 stretches are compositionally biased toward basic and acidic residues: residues 742–789 (SRGD…RRSD), 797–865 (DRPR…DRRG), and 873–899 (RGSD…ERTE).

The protein belongs to the polyribonucleotide nucleotidyltransferase family. Mg(2+) serves as cofactor.

Its subcellular location is the cytoplasm. It catalyses the reaction RNA(n+1) + phosphate = RNA(n) + a ribonucleoside 5'-diphosphate. Involved in mRNA degradation. Catalyzes the phosphorolysis of single-stranded polyribonucleotides processively in the 3'- to 5'-direction. In Bifidobacterium longum subsp. infantis (strain ATCC 15697 / DSM 20088 / JCM 1222 / NCTC 11817 / S12), this protein is Polyribonucleotide nucleotidyltransferase.